Here is a 154-residue protein sequence, read N- to C-terminus: Endoribonuclease YbeY (154 aa).

His-118, His-122, and His-128 together coordinate Zn(2+).

Belongs to the endoribonuclease YbeY family. The cofactor is Zn(2+).

The protein resides in the cytoplasm. Its function is as follows. Single strand-specific metallo-endoribonuclease involved in late-stage 70S ribosome quality control and in maturation of the 3' terminus of the 16S rRNA. The polypeptide is Endoribonuclease YbeY (Macrococcus caseolyticus (strain JCSC5402) (Macrococcoides caseolyticum)).